A 351-amino-acid polypeptide reads, in one-letter code: MRRQDFNFELPEALIAQQPAKERTQSRLLVMNADGSVSDCHFPDILSYVNENDCLIFNNTKVIPARLFGQKLTGGKVELLIERVLDERRVLTHIRSSNAPKSGAKLRIEEAFDAEVLGREGALFEVQLSKDEAPELTALELIEAHGHMPLPPYIEREDQLEDKERYQTVYSEKPGAVAAPTAGLHFDNDLLDKIKAKGAAAGFVTLHVGAGTFKPVQVDDISEHVMHSEVIEVLPETVELIKQTRQKGGRVIAVGTTSVRCLESAASFSENGELAPYQGETDIFITPGYDFKVVDVLLTNFHLPESTLIMLVSALAGYDRTMQAYAHAVEQKYRFFSYGDAMLVHPPTSDS.

This sequence belongs to the QueA family. As to quaternary structure, monomer.

The protein localises to the cytoplasm. The catalysed reaction is 7-aminomethyl-7-carbaguanosine(34) in tRNA + S-adenosyl-L-methionine = epoxyqueuosine(34) in tRNA + adenine + L-methionine + 2 H(+). Its pathway is tRNA modification; tRNA-queuosine biosynthesis. Its function is as follows. Transfers and isomerizes the ribose moiety from AdoMet to the 7-aminomethyl group of 7-deazaguanine (preQ1-tRNA) to give epoxyqueuosine (oQ-tRNA). The polypeptide is S-adenosylmethionine:tRNA ribosyltransferase-isomerase (Hydrogenovibrio crunogenus (strain DSM 25203 / XCL-2) (Thiomicrospira crunogena)).